Here is a 150-residue protein sequence, read N- to C-terminus: uncharacterized protein (150 aa).

The region spanning 4–149 (IQIRNYQPGD…TNFYMRYKPQ (146 aa)) is the N-acetyltransferase domain.

Belongs to the acetyltransferase family.

This is an uncharacterized protein from Escherichia coli (strain K12).